The primary structure comprises 460 residues: Signal recognition particle 54 kDa protein (460 aa).

GTP contacts are provided by residues 104 to 111, 184 to 188, and 242 to 245; these read GLQGSGKT, DTAGR, and TKLD.

This sequence belongs to the GTP-binding SRP family. SRP54 subfamily. Part of the signal recognition particle protein translocation system, which is composed of SRP and FtsY. Archaeal SRP consists of a 7S RNA molecule of 300 nucleotides and two protein subunits: SRP54 and SRP19.

It localises to the cytoplasm. The catalysed reaction is GTP + H2O = GDP + phosphate + H(+). In terms of biological role, involved in targeting and insertion of nascent membrane proteins into the cytoplasmic membrane. Binds to the hydrophobic signal sequence of the ribosome-nascent chain (RNC) as it emerges from the ribosomes. The SRP-RNC complex is then targeted to the cytoplasmic membrane where it interacts with the SRP receptor FtsY. In Halobacterium salinarum (strain ATCC 29341 / DSM 671 / R1), this protein is Signal recognition particle 54 kDa protein.